The primary structure comprises 585 residues: Beta-(1--&gt;2)glucan export ATP-binding/permease protein NdvA (585 aa).

An ABC transmembrane type-1 domain is found at 21–301; that stretch reads VGAIVIANIV…MKAFATQIFE (281 aa). Transmembrane regions (helical) follow at residues 22–42, 55–75, 136–156, 158–178, 245–265, and 269–289; these read GAIVIANIVLAAITIAEPILF, VAPMLLLWAGFGVFNTIAFVL, QHLATAVALMLLIPTAFAMDV, LSLILVVLGAAYVMISKVVMS, LNRIASTISMMAILVIGTVLV, and ELGVGEVIAFIGFANLLIGRL. The 235-residue stretch at 335–569 folds into the ABC transporter domain; it reads VEFRDISFDF…NGRFAALLRA (235 aa). Position 368–375 (368–375) interacts with ATP; that stretch reads GPTGAGKT.

It belongs to the ABC transporter superfamily. Beta-(1--&gt;2)glucan exporter (TC 3.A.1.108.1) family. Homodimer.

It localises to the cell inner membrane. It carries out the reaction [(1-&gt;2)-beta-D-glucosyl](n)(in) + ATP + H2O = [(1-&gt;2)-beta-D-glucosyl](n)(out) + ADP + phosphate + H(+). Its function is as follows. Involved in beta-(1--&gt;2)glucan export which is required for nodulation of legume roots. May be involved in other classes of oligosaccharides export. Transmembrane domains (TMD) form a pore in the inner membrane and the ATP-binding domain (NBD) is responsible for energy generation. This chain is Beta-(1--&gt;2)glucan export ATP-binding/permease protein NdvA, found in Rhizobium meliloti (strain 1021) (Ensifer meliloti).